Consider the following 376-residue polypeptide: Erythronate-4-phosphate dehydrogenase (376 aa).

Ser45 and Thr67 together coordinate substrate. NAD(+) contacts are provided by residues 127–128 (QV), Asp147, and Thr176. Arg209 is a catalytic residue. Asp233 is an NAD(+) binding site. The active site involves Glu238. His255 serves as the catalytic Proton donor. Gly258 is a binding site for NAD(+). Residue Tyr259 coordinates substrate.

The protein belongs to the D-isomer specific 2-hydroxyacid dehydrogenase family. PdxB subfamily. As to quaternary structure, homodimer.

It is found in the cytoplasm. The catalysed reaction is 4-phospho-D-erythronate + NAD(+) = (R)-3-hydroxy-2-oxo-4-phosphooxybutanoate + NADH + H(+). Its pathway is cofactor biosynthesis; pyridoxine 5'-phosphate biosynthesis; pyridoxine 5'-phosphate from D-erythrose 4-phosphate: step 2/5. Catalyzes the oxidation of erythronate-4-phosphate to 3-hydroxy-2-oxo-4-phosphonooxybutanoate. In Aliivibrio fischeri (strain ATCC 700601 / ES114) (Vibrio fischeri), this protein is Erythronate-4-phosphate dehydrogenase.